The following is a 468-amino-acid chain: Citrate synthase, mitochondrial (468 aa).

A mitochondrion-targeting transit peptide spans 1–30 (MSLITAGRLCARILGAKNSPCALIAARQAS). Residues histidine 303 and histidine 349 contribute to the active site. Residue arginine 358 coordinates oxaloacetate. The active site involves aspartate 404. Oxaloacetate contacts are provided by arginine 430 and arginine 450.

The protein belongs to the citrate synthase family. In terms of assembly, homodimer.

The protein resides in the mitochondrion matrix. The enzyme catalyses oxaloacetate + acetyl-CoA + H2O = citrate + CoA + H(+). The protein operates within carbohydrate metabolism; tricarboxylic acid cycle; isocitrate from oxaloacetate: step 1/2. In terms of biological role, key enzyme of the Krebs tricarboxylic acid cycle which catalyzes the synthesis of citrate from acetyl coenzyme A and oxaloacetate. This Xenopus tropicalis (Western clawed frog) protein is Citrate synthase, mitochondrial (cs).